Reading from the N-terminus, the 265-residue chain is MLASEVIQAYEAFCPQEFSMEGDSRGLQIGTLDKGIQRVMVALDIREETVAEAIEKGVDLIIVKHAPIFRPIKDLLASRPQNQIYIDLIKHDIAVYVSHTNIDIVENGLNDWFCQMLGIEETTYLQETGPERGIGRIGNIQPQTFWELAQQVKQVFDLDSLRMVHYQEDDLQKPISRVAICGGSGQSFYKDALAKGADVYITGDIYYHTAQDMLSDGLLALDPGHYIEVIFVEKIAALLSQWKEDKGWSIDILPSQASTNPFHHI.

A divalent metal cation is bound by residues histidine 65, aspartate 103, histidine 225, and glutamate 228.

This sequence belongs to the GTP cyclohydrolase I type 2/NIF3 family. In terms of assembly, homohexamer.

This chain is GTP cyclohydrolase 1 type 2 homolog, found in Streptococcus pneumoniae serotype 4 (strain ATCC BAA-334 / TIGR4).